Reading from the N-terminus, the 164-residue chain is Endoribonuclease YbeY (164 aa).

Zn(2+)-binding residues include histidine 130, histidine 134, and histidine 140.

The protein belongs to the endoribonuclease YbeY family. Zn(2+) is required as a cofactor.

The protein localises to the cytoplasm. Functionally, single strand-specific metallo-endoribonuclease involved in late-stage 70S ribosome quality control and in maturation of the 3' terminus of the 16S rRNA. In Streptococcus mutans serotype c (strain ATCC 700610 / UA159), this protein is Endoribonuclease YbeY.